The following is a 256-amino-acid chain: Hydroxyethylthiazole kinase (256 aa).

Residue Met-37 participates in substrate binding. Positions 113 and 159 each coordinate ATP. Residue Gly-186 participates in substrate binding.

It belongs to the Thz kinase family. It depends on Mg(2+) as a cofactor.

It carries out the reaction 5-(2-hydroxyethyl)-4-methylthiazole + ATP = 4-methyl-5-(2-phosphooxyethyl)-thiazole + ADP + H(+). It participates in cofactor biosynthesis; thiamine diphosphate biosynthesis; 4-methyl-5-(2-phosphoethyl)-thiazole from 5-(2-hydroxyethyl)-4-methylthiazole: step 1/1. Functionally, catalyzes the phosphorylation of the hydroxyl group of 4-methyl-5-beta-hydroxyethylthiazole (THZ). This chain is Hydroxyethylthiazole kinase, found in Exiguobacterium sibiricum (strain DSM 17290 / CCUG 55495 / CIP 109462 / JCM 13490 / 255-15).